Here is a 344-residue protein sequence, read N- to C-terminus: Probable dual-specificity RNA methyltransferase RlmN (344 aa).

Glu-89 functions as the Proton acceptor in the catalytic mechanism. One can recognise a Radical SAM core domain in the interval 95–329 (TDQRLTVCVS…VSLRASRGLD (235 aa)). A disulfide bridge connects residues Cys-102 and Cys-334. Residues Cys-109, Cys-113, and Cys-116 each contribute to the [4Fe-4S] cluster site. S-adenosyl-L-methionine-binding positions include 156-157 (GE), Ser-186, 215-217 (SLH), and Asn-291. Catalysis depends on Cys-334, which acts as the S-methylcysteine intermediate.

The protein belongs to the radical SAM superfamily. RlmN family. [4Fe-4S] cluster serves as cofactor.

It is found in the cytoplasm. The enzyme catalyses adenosine(2503) in 23S rRNA + 2 reduced [2Fe-2S]-[ferredoxin] + 2 S-adenosyl-L-methionine = 2-methyladenosine(2503) in 23S rRNA + 5'-deoxyadenosine + L-methionine + 2 oxidized [2Fe-2S]-[ferredoxin] + S-adenosyl-L-homocysteine. It catalyses the reaction adenosine(37) in tRNA + 2 reduced [2Fe-2S]-[ferredoxin] + 2 S-adenosyl-L-methionine = 2-methyladenosine(37) in tRNA + 5'-deoxyadenosine + L-methionine + 2 oxidized [2Fe-2S]-[ferredoxin] + S-adenosyl-L-homocysteine. Functionally, specifically methylates position 2 of adenine 2503 in 23S rRNA and position 2 of adenine 37 in tRNAs. In Parasynechococcus marenigrum (strain WH8102), this protein is Probable dual-specificity RNA methyltransferase RlmN.